Consider the following 201-residue polypeptide: Small ribosomal subunit protein uS4c (201 aa).

Residues 15–43 (LGALPGLTRKTPKSGSNQKKKFHSGKKEQ) are disordered. An S4 RNA-binding domain is found at 89–150 (MRLDNILFRL…NQRSKRLVQN (62 aa)).

The protein belongs to the universal ribosomal protein uS4 family. In terms of assembly, part of the 30S ribosomal subunit. Contacts protein S5. The interaction surface between S4 and S5 is involved in control of translational fidelity.

The protein resides in the plastid. Its subcellular location is the chloroplast. In terms of biological role, one of the primary rRNA binding proteins, it binds directly to 16S rRNA where it nucleates assembly of the body of the 30S subunit. Functionally, with S5 and S12 plays an important role in translational accuracy. In Sorghum bicolor (Sorghum), this protein is Small ribosomal subunit protein uS4c (rps4).